Consider the following 305-residue polypeptide: Ornithine carbamoyltransferase (305 aa).

Residues 52–55, Gln79, Arg103, and 130–133 each bind carbamoyl phosphate; these read STRT and HPCQ. Residues Asn161, Asp221, and 225 to 226 contribute to the L-ornithine site; that span reads SM. Carbamoyl phosphate contacts are provided by residues 261-262 and Arg289; that span reads CL.

This sequence belongs to the aspartate/ornithine carbamoyltransferase superfamily. OTCase family.

The protein resides in the cytoplasm. It carries out the reaction carbamoyl phosphate + L-ornithine = L-citrulline + phosphate + H(+). Its pathway is amino-acid biosynthesis; L-arginine biosynthesis; L-arginine from L-ornithine and carbamoyl phosphate: step 1/3. Its function is as follows. Reversibly catalyzes the transfer of the carbamoyl group from carbamoyl phosphate (CP) to the N(epsilon) atom of ornithine (ORN) to produce L-citrulline. This chain is Ornithine carbamoyltransferase, found in Methanocorpusculum labreanum (strain ATCC 43576 / DSM 4855 / Z).